A 207-amino-acid chain; its full sequence is LexA repressor (207 aa).

Positions 28–48 (RAEIARELGFRSANAAEEHLK) form a DNA-binding region, H-T-H motif. Residues serine 124 and lysine 161 each act as for autocatalytic cleavage activity in the active site.

Belongs to the peptidase S24 family. As to quaternary structure, homodimer.

The enzyme catalyses Hydrolysis of Ala-|-Gly bond in repressor LexA.. Its function is as follows. Represses a number of genes involved in the response to DNA damage (SOS response), including recA and lexA. In the presence of single-stranded DNA, RecA interacts with LexA causing an autocatalytic cleavage which disrupts the DNA-binding part of LexA, leading to derepression of the SOS regulon and eventually DNA repair. The sequence is that of LexA repressor from Vibrio vulnificus (strain CMCP6).